The primary structure comprises 22 residues: MRYISLNTTIITTTETTGYGAG.

Belongs to the thr operon leader peptide family.

Functionally, this protein is involved in control of the biosynthesis of threonine. The protein is thr operon leader peptide of Yersinia pestis bv. Antiqua (strain Antiqua).